The chain runs to 335 residues: Phosphate acyltransferase (335 aa).

Belongs to the PlsX family. As to quaternary structure, homodimer. Probably interacts with PlsY.

The protein localises to the cytoplasm. The catalysed reaction is a fatty acyl-[ACP] + phosphate = an acyl phosphate + holo-[ACP]. It participates in lipid metabolism; phospholipid metabolism. Functionally, catalyzes the reversible formation of acyl-phosphate (acyl-PO(4)) from acyl-[acyl-carrier-protein] (acyl-ACP). This enzyme utilizes acyl-ACP as fatty acyl donor, but not acyl-CoA. The polypeptide is Phosphate acyltransferase (Desulforudis audaxviator (strain MP104C)).